The chain runs to 366 residues: Beta-1,3-glucan-binding protein (366 aa).

The signal sequence occupies residues 1–17 (MKGFVASVVLLACGALA). Residues 18 to 364 (ADIVEPEDCT…YVRVWKMEST (347 aa)) enclose the GH16 domain. N-linked (GlcNAc...) asparagine glycosylation is present at Asn-66.

It belongs to the glycosyl hydrolase 16 family. Constitutively expressed in hemocytes.

Its subcellular location is the secreted. In terms of biological role, binds to beta-1,3-glucan. May play a role in recognition of microorganisms and in activation of the prophenoloxidase cascade. The polypeptide is Beta-1,3-glucan-binding protein (Penaeus monodon (Giant tiger prawn)).